Consider the following 72-residue polypeptide: Cytochrome c oxidase subunit 2 (72 aa).

Residues 1 to 14 lie on the Mitochondrial intermembrane side of the membrane; the sequence is MAHPSQLGFQDAAS. Residues 15 to 45 form a helical membrane-spanning segment; it reads PVMEELLHFHDHALMIVFLISTLVLYIIVAM. The Mitochondrial matrix portion of the chain corresponds to 46 to 72; that stretch reads VSTKLTNKYXLDSQEIEVIWTXLPAVI.

The protein belongs to the cytochrome c oxidase subunit 2 family. As to quaternary structure, component of the cytochrome c oxidase (complex IV, CIV), a multisubunit enzyme composed of 14 subunits. The complex is composed of a catalytic core of 3 subunits MT-CO1, MT-CO2 and MT-CO3, encoded in the mitochondrial DNA, and 11 supernumerary subunits COX4I, COX5A, COX5B, COX6A, COX6B, COX6C, COX7A, COX7B, COX7C, COX8 and NDUFA4, which are encoded in the nuclear genome. The complex exists as a monomer or a dimer and forms supercomplexes (SCs) in the inner mitochondrial membrane with NADH-ubiquinone oxidoreductase (complex I, CI) and ubiquinol-cytochrome c oxidoreductase (cytochrome b-c1 complex, complex III, CIII), resulting in different assemblies (supercomplex SCI(1)III(2)IV(1) and megacomplex MCI(2)III(2)IV(2)). Found in a complex with TMEM177, COA6, COX18, COX20, SCO1 and SCO2. Interacts with TMEM177 in a COX20-dependent manner. Interacts with COX20. Interacts with COX16. Requires Cu cation as cofactor.

It is found in the mitochondrion inner membrane. The catalysed reaction is 4 Fe(II)-[cytochrome c] + O2 + 8 H(+)(in) = 4 Fe(III)-[cytochrome c] + 2 H2O + 4 H(+)(out). Component of the cytochrome c oxidase, the last enzyme in the mitochondrial electron transport chain which drives oxidative phosphorylation. The respiratory chain contains 3 multisubunit complexes succinate dehydrogenase (complex II, CII), ubiquinol-cytochrome c oxidoreductase (cytochrome b-c1 complex, complex III, CIII) and cytochrome c oxidase (complex IV, CIV), that cooperate to transfer electrons derived from NADH and succinate to molecular oxygen, creating an electrochemical gradient over the inner membrane that drives transmembrane transport and the ATP synthase. Cytochrome c oxidase is the component of the respiratory chain that catalyzes the reduction of oxygen to water. Electrons originating from reduced cytochrome c in the intermembrane space (IMS) are transferred via the dinuclear copper A center (CU(A)) of subunit 2 and heme A of subunit 1 to the active site in subunit 1, a binuclear center (BNC) formed by heme A3 and copper B (CU(B)). The BNC reduces molecular oxygen to 2 water molecules using 4 electrons from cytochrome c in the IMS and 4 protons from the mitochondrial matrix. This Gomphosus varius (Bird wrasse) protein is Cytochrome c oxidase subunit 2 (mt-co2).